We begin with the raw amino-acid sequence, 509 residues long: Surface lipoprotein assembly modifier (509 aa).

The signal sequence occupies residues 1 to 32 (MNLMINLKPLTFLPFFGRLVFLSGVIYNTAWA). Positions 33 to 204 (NTVIPVDNSR…SYIDTINQRD (172 aa)) are N-terminal domain. Residues 43–72 (PDETFSQTSPKQHLFSQKPKPTEPTSSASS) are disordered. Polar residues predominate over residues 46–57 (TFSQTSPKQHLF). The stretch at 120–153 (FLLKWAQAVVARKQGKLNESVRLYRQIIAEKPNL) is one TPR repeat. The C-terminal probable beta barrel stretch occupies residues 205 to 509 (SWNVYGGVNY…RIYLTFSKTF (305 aa)). A run of 14 beta stranded transmembrane segments spans residues 206–216 (WNVYGGVNYLH), 245–256 (LSYFINLSKNWS), 261–270 (FFTEFSADIN), 284–294 (STRLNLGGGYR), 298–308 (TEVKLMPFVEQ), 331–341 (SGINLDVDYWL), 345–355 (WKISTVLEYTE), 371–381 (YSISNTLIYMP), 386–395 (FWFVGLDYYQ), 408–417 (QGIRLGWGQE), 423–432 (STRLQTSYAT), 461–470 (GVNFTIWHRS), 476–485 (ITPKITWAYQ), and 499–509 (NRIYLTFSKTF).

It belongs to the Slam family.

It is found in the cell outer membrane. Functionally, required for correct export to the cell surface of some cell outer membrane lipoproteins (tested with PM1514) upon heterologous expression in E.coli and probably also in Pasteurella. The sequence is that of Surface lipoprotein assembly modifier from Pasteurella multocida (strain Pm70).